The sequence spans 312 residues: DNA-directed RNA polymerase subunit alpha (312 aa).

Positions 1–226 (MIEFEKPNIT…EHFKVFESAD (226 aa)) are alpha N-terminal domain (alpha-NTD). An alpha C-terminal domain (alpha-CTD) region spans residues 243–312 (KEKKLEMTIE…DLGLSLRQED (70 aa)).

Belongs to the RNA polymerase alpha chain family. In terms of assembly, homodimer. The RNAP catalytic core consists of 2 alpha, 1 beta, 1 beta' and 1 omega subunit. When a sigma factor is associated with the core the holoenzyme is formed, which can initiate transcription.

The catalysed reaction is RNA(n) + a ribonucleoside 5'-triphosphate = RNA(n+1) + diphosphate. Functionally, DNA-dependent RNA polymerase catalyzes the transcription of DNA into RNA using the four ribonucleoside triphosphates as substrates. The sequence is that of DNA-directed RNA polymerase subunit alpha from Lactobacillus acidophilus (strain ATCC 700396 / NCK56 / N2 / NCFM).